The following is a 505-amino-acid chain: Ribose import ATP-binding protein RbsA 1 (505 aa).

ABC transporter domains follow at residues 13–249 (LALR…VGRD) and 254–503 (YPKQ…TGRA). An ATP-binding site is contributed by 45 to 52 (GENGAGKS).

The protein belongs to the ABC transporter superfamily. Ribose importer (TC 3.A.1.2.1) family. In terms of assembly, the complex is composed of an ATP-binding protein (RbsA), two transmembrane proteins (RbsC) and a solute-binding protein (RbsB).

Its subcellular location is the cell membrane. It carries out the reaction D-ribose(out) + ATP + H2O = D-ribose(in) + ADP + phosphate + H(+). In terms of biological role, part of the ABC transporter complex RbsABC involved in ribose import. Responsible for energy coupling to the transport system. This is Ribose import ATP-binding protein RbsA 1 from Streptomyces coelicolor (strain ATCC BAA-471 / A3(2) / M145).